The primary structure comprises 495 residues: UDP-glycosyltransferase 1 (495 aa).

Histidine 24 functions as the Proton acceptor in the catalytic mechanism. Histidine 24 contributes to the an anthocyanidin binding site. The active-site Charge relay is aspartate 129. 6 residues coordinate UDP-alpha-D-glucose: glutamine 358, histidine 373, tryptophan 376, asparagine 377, serine 378, and glutamate 381. Glycine 396 contacts an anthocyanidin. 2 residues coordinate UDP-alpha-D-glucose: aspartate 397 and glutamine 398.

The protein belongs to the UDP-glycosyltransferase family.

It catalyses the reaction oleanolate + UDP-alpha-D-glucose = oleanolate 3-O-beta-D-glucoside + UDP + H(+). Catalyzes the transfer of a glucose (Glc) moiety from UDP-Glc to the C-3 position of the oleanane sapogenins oleanolate and hederagenin. The monoglucosylated hederagenin 3-O-beta-D-glucoside is a feeding deterrent of the yellow-striped flea beetle (Phyllotreta nemorum). The sequence is that of UDP-glycosyltransferase 1 from Barbarea vulgaris (Yellow rocket).